A 189-amino-acid polypeptide reads, in one-letter code: Potassium-transporting ATPase KdpC subunit (189 aa).

Residues 6-26 form a helical membrane-spanning segment; sequence PAILFFIVFTILCGGVYPAVV.

The protein belongs to the KdpC family. In terms of assembly, the system is composed of three essential subunits: KdpA, KdpB and KdpC.

It localises to the cell inner membrane. Functionally, part of the high-affinity ATP-driven potassium transport (or Kdp) system, which catalyzes the hydrolysis of ATP coupled with the electrogenic transport of potassium into the cytoplasm. This subunit acts as a catalytic chaperone that increases the ATP-binding affinity of the ATP-hydrolyzing subunit KdpB by the formation of a transient KdpB/KdpC/ATP ternary complex. In Geotalea uraniireducens (strain Rf4) (Geobacter uraniireducens), this protein is Potassium-transporting ATPase KdpC subunit.